A 917-amino-acid polypeptide reads, in one-letter code: Protein STE5 (917 aa).

Disordered stretches follow at residues 1–25 and 58–151; these read MMETPTDNIVSPFHNFGSSTQYSGT and FQRS…LSDN. A compositionally biased stretch (polar residues) spans 16–25; that stretch reads FGSSTQYSGT. The span at 69–84 shows a compositional bias: low complexity; the sequence is SPSPISSSTFSFSPKS. Composition is skewed to polar residues over residues 85 to 110 and 118 to 138; these read RVTSSNSSGNEDGNLMNTPSTVSTDY and TSSLPRPNSNLFHASNSNLSR. S329 is modified (phosphoserine). A compositionally biased stretch (acidic residues) spans 778 to 794; the sequence is HDDDDEEDNDDSTDNEL. Positions 778 to 821 are disordered; the sequence is HDDDDEEDNDDSTDNELDNSSGSLSDAESTTTIHIDSPFDNENA. The segment covering 799-821 has biased composition (polar residues); sequence GSLSDAESTTTIHIDSPFDNENA.

It to yeast FAR1. Post-translationally, may be regulated at the phosphorylation level, and by the mating type of the cell and depends on an intact pheromone-response pathway.

It is found in the cytoplasm. In terms of biological role, component of the pheromone signal transduction pathway. It mediates pheromone signals acting between STE20 and STE11. It is absolutely required for pheromone-induced transcription of FUS1. May play a role in cell-cycle arrest in response to pheromone. This Saccharomyces cerevisiae (strain ATCC 204508 / S288c) (Baker's yeast) protein is Protein STE5 (STE5).